Consider the following 600-residue polypeptide: Elongation factor 4 (600 aa).

In terms of domain architecture, tr-type G spans 4-186 (SKIRNFSIIA…AIVNKIPAPY (183 aa)). GTP is bound by residues 16-21 (DHGKST) and 133-136 (NKVD).

Belongs to the TRAFAC class translation factor GTPase superfamily. Classic translation factor GTPase family. LepA subfamily.

The protein localises to the cell membrane. The catalysed reaction is GTP + H2O = GDP + phosphate + H(+). In terms of biological role, required for accurate and efficient protein synthesis under certain stress conditions. May act as a fidelity factor of the translation reaction, by catalyzing a one-codon backward translocation of tRNAs on improperly translocated ribosomes. Back-translocation proceeds from a post-translocation (POST) complex to a pre-translocation (PRE) complex, thus giving elongation factor G a second chance to translocate the tRNAs correctly. Binds to ribosomes in a GTP-dependent manner. In Mesoplasma florum (strain ATCC 33453 / NBRC 100688 / NCTC 11704 / L1) (Acholeplasma florum), this protein is Elongation factor 4.